The sequence spans 166 residues: Transcription antitermination protein NusB (166 aa).

A compositionally biased stretch (basic and acidic residues) spans 1 to 18; it reads MISDESDRFNPRDPKPAD. Residues 1 to 30 form a disordered region; it reads MISDESDRFNPRDPKPADAGKPSKSAKRRE.

This sequence belongs to the NusB family.

Its function is as follows. Involved in transcription antitermination. Required for transcription of ribosomal RNA (rRNA) genes. Binds specifically to the boxA antiterminator sequence of the ribosomal RNA (rrn) operons. This chain is Transcription antitermination protein NusB, found in Pseudomonas fluorescens (strain Pf0-1).